We begin with the raw amino-acid sequence, 372 residues long: Glycerol-3-phosphate dehydrogenase [NAD(+)] (372 aa).

Over residues M1 to S16 the composition is skewed to polar residues. A disordered region spans residues M1 to S23. NAD(+) contacts are provided by residues G29 to G34, F60, F117, K140, and A173. Residue K140 participates in substrate binding. K225 functions as the Proton acceptor in the catalytic mechanism. NAD(+) contacts are provided by R289, K318, and Q320. R289–N290 provides a ligand contact to substrate.

This sequence belongs to the NAD-dependent glycerol-3-phosphate dehydrogenase family.

The enzyme catalyses sn-glycerol 3-phosphate + NAD(+) = dihydroxyacetone phosphate + NADH + H(+). This is Glycerol-3-phosphate dehydrogenase [NAD(+)] (GPDH) from Cuphea lanceolata (Cigar flower).